The following is a 1436-amino-acid chain: ABC transporter C family member 15 (1436 aa).

Helical transmembrane passes span 8-28, 129-149, 165-185, 238-258, 261-281, 349-369, and 373-393; these read IINKIINFFSTIYILCKIYLY, YIATGLFVFVSVFSFITPLIL, IYIGIIQCFLLFLSSFINMAS, FFQYFFCHYYIEIFLFPIQIL, LGFLIYVIGIAGFVGFLVMLI, IIYWVLVQIVTQASSGLVLVS, and TYTLLGYEVSLEIAFTSITIL. The ABC transmembrane type-1 1 domain maps to 128 to 412; it reads NYIATGLFVF…LPDCLHKFIS (285 aa). One can recognise an ABC transporter 1 domain in the interval 543–766; the sequence is ADYQDLLSIN…IDFEMILKEK (224 aa). Residue 575–582 coordinates ATP; sequence GGVRSGKT. Residues 865-1155 enclose the ABC transmembrane type-1 2 domain; that stretch reads KKYIRMGSSI…FMRQFGELES (291 aa). 6 helical membrane-spanning segments follow: residues 873–893, 919–939, 985–1005, 1017–1039, 1101–1121, and 1127–1147; these read SISFFIFTCIIYLTSQIILLL, LIYLAYIGGFVFTLGVRYLLI, IDILLLDCFSDVLYCGACLVT, IAIPFVILIAINYIFQLFYNYSV, IGIRVEFLSAIVVLMSALFSI, and GLSALGVTTALGITFNLNWFM. An ABC transporter 2 domain is found at 1193–1426; it reads IEFKNVEIRY…STSRFSKLIK (234 aa). An ATP-binding site is contributed by 1227 to 1234; the sequence is GRSGSGKS.

The protein belongs to the ABC transporter superfamily. ABCC family. Conjugate transporter (TC 3.A.1.208) subfamily.

It localises to the membrane. In Dictyostelium discoideum (Social amoeba), this protein is ABC transporter C family member 15 (abcC15).